The chain runs to 63 residues: MLICPNCKSKDIGKIGVNQYYCWGCFIELTVAKGKIATHQVEEDGTLSSLDDLFSEDERSINF.

This is an uncharacterized protein from Bacillus subtilis (strain 168).